Reading from the N-terminus, the 241-residue chain is GTP cyclohydrolase 1 type 2 homolog (241 aa).

A divalent metal cation-binding residues include His62, His63, Asp101, His207, and Glu211.

It belongs to the GTP cyclohydrolase I type 2/NIF3 family. As to quaternary structure, homohexamer.

The chain is GTP cyclohydrolase 1 type 2 homolog from Campylobacter jejuni subsp. jejuni serotype O:2 (strain ATCC 700819 / NCTC 11168).